An 89-amino-acid chain; its full sequence is Small ribosomal subunit protein uS15 (89 aa).

Belongs to the universal ribosomal protein uS15 family. Part of the 30S ribosomal subunit. Forms a bridge to the 50S subunit in the 70S ribosome, contacting the 23S rRNA.

Its function is as follows. One of the primary rRNA binding proteins, it binds directly to 16S rRNA where it helps nucleate assembly of the platform of the 30S subunit by binding and bridging several RNA helices of the 16S rRNA. Forms an intersubunit bridge (bridge B4) with the 23S rRNA of the 50S subunit in the ribosome. The chain is Small ribosomal subunit protein uS15 from Oenococcus oeni (strain ATCC BAA-331 / PSU-1).